Consider the following 609-residue polypeptide: UvrABC system protein C (609 aa).

The region spanning 15–92 is the GIY-YIG domain; sequence TGSGVYQMQD…IKQFRPRYNV (78 aa). Residues 202–237 form the UVR domain; that stretch reads DQVIIKLTERMEVTSENLVFEEAAHYRDQIRQLRRL.

This sequence belongs to the UvrC family. As to quaternary structure, interacts with UvrB in an incision complex.

The protein resides in the cytoplasm. Functionally, the UvrABC repair system catalyzes the recognition and processing of DNA lesions. UvrC both incises the 5' and 3' sides of the lesion. The N-terminal half is responsible for the 3' incision and the C-terminal half is responsible for the 5' incision. The polypeptide is UvrABC system protein C (Coxiella burnetii (strain RSA 493 / Nine Mile phase I)).